The sequence spans 511 residues: Probable pectinesterase/pectinesterase inhibitor 17 (511 aa).

The first 23 residues, 1 to 23, serve as a signal peptide directing secretion; that stretch reads MMAFRAYIINFVILCILVASTVS. The tract at residues 24–171 is pectinesterase inhibitor 17; it reads GYNQKDVKAW…SNLLCNTLAI (148 aa). N-linked (GlcNAc...) asparagine glycosylation is found at N112 and N160. Positions 237 to 414 are pectinesterase 17; the sequence is VKQGVYSENL…LRPVLGSTKT (178 aa). The substrate site is built by T277 and Q307. D330 acts as the Proton donor; for pectinesterase activity in catalysis. A disulfide bridge connects residues C344 and C364. Residue D351 is the Nucleophile; for pectinesterase activity of the active site. R418 and W420 together coordinate substrate.

The protein in the N-terminal section; belongs to the PMEI family. It in the C-terminal section; belongs to the pectinesterase family. In terms of tissue distribution, expressed in siliques.

It localises to the secreted. The protein localises to the cell wall. It catalyses the reaction [(1-&gt;4)-alpha-D-galacturonosyl methyl ester](n) + n H2O = [(1-&gt;4)-alpha-D-galacturonosyl](n) + n methanol + n H(+). It participates in glycan metabolism; pectin degradation; 2-dehydro-3-deoxy-D-gluconate from pectin: step 1/5. Its function is as follows. Acts in the modification of cell walls via demethylesterification of cell wall pectin. The chain is Probable pectinesterase/pectinesterase inhibitor 17 (PME17) from Arabidopsis thaliana (Mouse-ear cress).